A 545-amino-acid chain; its full sequence is Probable protein kinase UbiB (545 aa).

A Protein kinase domain is found at 123-501 (DFDIVPLASA…RVRQHQSHYL (379 aa)). ATP contacts are provided by residues 129 to 137 (LASASIAQV) and K152. Residue D287 is the Proton acceptor of the active site. A run of 2 helical transmembrane segments spans residues 498–518 (SHYL…VVLS) and 521–541 (EWDG…LVGW).

This sequence belongs to the ABC1 family. UbiB subfamily.

The protein localises to the cell inner membrane. It participates in cofactor biosynthesis; ubiquinone biosynthesis [regulation]. In terms of biological role, is probably a protein kinase regulator of UbiI activity which is involved in aerobic coenzyme Q (ubiquinone) biosynthesis. This chain is Probable protein kinase UbiB, found in Erwinia tasmaniensis (strain DSM 17950 / CFBP 7177 / CIP 109463 / NCPPB 4357 / Et1/99).